An 841-amino-acid chain; its full sequence is SLIT and NTRK-like protein 6 (841 aa).

The signal sequence occupies residues 1 to 26; that stretch reads MKLWIHLFYSSLLACISLHSQTPVLS. An LRRNT 1 domain is found at 27 to 67; that stretch reads SRGSCDSLCNCEEKDGTMLINCEAKGIKMVSEISVPPSRPF. Topologically, residues 27-608 are extracellular; it reads SRGSCDSLCN…RSLTDAVPLS (582 aa). LRR repeat units follow at residues 89–110, 113–134, 137–158, 161–182, and 184–205; these read NAIS…AFNG, LLKQ…TFHG, NLEF…AFSK, RLKV…IFRF, and PLTH…GFLE. One can recognise an LRRCT 1 domain in the interval 218 to 269; it reads NKWACNCDLLQLKTWLENMPPQSIIGDVVCNSPPFFKGSILSRLKKESICPT. The LRRNT 2 domain occupies 320–361; that stretch reads PSTQLPGPYCPIPCNCKVLSPSGLLIHCQERNIESLSDLRPP. 6 LRR repeats span residues 364–385, 388–409, 412–433, 436–457, 460–481, and 483–504; these read NPRK…DLVE, TLEM…SFMN, RLQK…MFLG, NLEY…TFNP, KLKV…IFSG, and PLTK…NILD. One can recognise an LRRCT 2 domain in the interval 517–568; sequence NPWDCSCDLVGLQQWIQKLSKNTVTDDILCTSPGHLDKKELKALNSEILCPG. A helical membrane pass occupies residues 609-629; the sequence is VLILGLLIMFITIVFCAAGIV. The Cytoplasmic portion of the chain corresponds to 630–841; the sequence is VLVLHRRRRY…DYLEVLEQQT (212 aa).

This sequence belongs to the SLITRK family. In adult brain, highly expressed in putamen with no expression in cerebral cortex. Expressed in adult and fetal lung and fetal liver. Also expressed at high levels in some brain tumors including medulloblastomas and primitive neuroectodermal tumors.

It localises to the cell membrane. Regulator of neurite outgrowth required for normal hearing and vision. The protein is SLIT and NTRK-like protein 6 (SLITRK6) of Homo sapiens (Human).